A 224-amino-acid chain; its full sequence is Steroid receptor RNA activator 1 (224 aa).

2 disordered regions span residues 1–90 and 201–224; these read MAEL…EPTS and AANE…QQAS. 3 positions are modified to phosphoserine: Ser-48, Ser-57, and Ser-75. The span at 58–76 shows a compositional bias: pro residues; it reads PGPPPMGPPPPSSKAPRSP. Residues 201–215 are compositionally biased toward basic and acidic residues; sequence AANEEKSAATAEKNH.

Belongs to the SRA1 family. As to quaternary structure, SRA1 RNA exists in a ribonucleoprotein complex containing NCOA1. The RNA also forms a complex with PUS1 and RARG in the nucleus. Interacts with AR. As to expression, highly expressed in liver and skeletal muscle and to a lesser extent in brain. Also expressed in both normal and tumorigenic breast epithelial cell lines. Significantly up-regulated in human tumors of the breast, ovary, and uterus.

It is found in the nucleus. It localises to the cytoplasm. Functionally, functional RNA which acts as a transcriptional coactivator that selectively enhances steroid receptor-mediated transactivation ligand-independently through a mechanism involving the modulating N-terminal domain (AF-1) of steroid receptors. Also mediates transcriptional coactivation of steroid receptors ligand-dependently through the steroid-binding domain (AF-2). Enhances cellular proliferation and differentiation and promotes apoptosis in vivo. May play a role in tumorigenesis. The protein is Steroid receptor RNA activator 1 of Homo sapiens (Human).